Consider the following 513-residue polypeptide: Putative GMP synthase [glutamine-hydrolyzing] (513 aa).

The 191-residue stretch at 8 to 198 (MIVVLDFGGQ…AFAVCGCEGN (191 aa)) folds into the Glutamine amidotransferase type-1 domain. Cys85 (nucleophile) is an active-site residue. Glu174 is an active-site residue. Residues 199–388 (WSMENFIELE…LGIPDEVVWR (190 aa)) form the GMPS ATP-PPase domain. 226-232 (SGGVDSS) serves as a coordination point for ATP.

As to quaternary structure, homodimer.

It catalyses the reaction XMP + L-glutamine + ATP + H2O = GMP + L-glutamate + AMP + diphosphate + 2 H(+). Its pathway is purine metabolism; GMP biosynthesis; GMP from XMP (L-Gln route): step 1/1. Functionally, catalyzes the synthesis of GMP from XMP. The sequence is that of Putative GMP synthase [glutamine-hydrolyzing] (guaA) from Halalkalibacterium halodurans (strain ATCC BAA-125 / DSM 18197 / FERM 7344 / JCM 9153 / C-125) (Bacillus halodurans).